We begin with the raw amino-acid sequence, 372 residues long: 2-aminoethylphosphonate--pyruvate transaminase 2 (372 aa).

Position 192 is an N6-(pyridoxal phosphate)lysine (Lys-192).

It belongs to the class-V pyridoxal-phosphate-dependent aminotransferase family. PhnW subfamily. As to quaternary structure, homodimer. It depends on pyridoxal 5'-phosphate as a cofactor.

It carries out the reaction (2-aminoethyl)phosphonate + pyruvate = phosphonoacetaldehyde + L-alanine. In terms of biological role, involved in phosphonate degradation. This is 2-aminoethylphosphonate--pyruvate transaminase 2 from Polaromonas sp. (strain JS666 / ATCC BAA-500).